Reading from the N-terminus, the 119-residue chain is Integration host factor subunit alpha (119 aa).

The segment at 96 to 119 (INGQQANGKMNGESAPSEFSAETE) is disordered.

It belongs to the bacterial histone-like protein family. Heterodimer of an alpha and a beta chain.

In terms of biological role, this protein is one of the two subunits of integration host factor, a specific DNA-binding protein that functions in genetic recombination as well as in transcriptional and translational control. The chain is Integration host factor subunit alpha from Bradyrhizobium sp. (strain ORS 278).